Reading from the N-terminus, the 489-residue chain is MSREEVESLIQEVLEVYPEKARKDRAKHLSPNDPALEQSKKCITSNKKSQPGLMTIRGCAYAGSKGVVWGPIKDMIHISHGPVGCGQSSRAGRGNYYIGTTGVNAFVTMNFTSDFQEKDIVFGGDKKLAKLIDEIETLFPLKKGISVQSECPIGLIGDDIEAVAKKKAAEHETTVVPVRCEGFRGVSQSLGHHIANDAIRDWVLDKRDDDTSFETTPYDVSIIGDYNIGGDAWSSRILLEEMGLRVVATWSGDGTISQMELTPKVKLNLVHCYRSMNYISRHMEEKYGIPLMEYNFFGPTKTAESLRAIAEHFDDSIKAKCEQVIAKYQSEWEAVIAKYRPSLEGKRVMLYVGGLLPRHVIGAYKDLGIELVGTGYGFGHNDDYDRTLKEMGNATLLYDDVTGYEFEEFVKRINPDLIGSGIKEKYIFQKMGIPFRQMHSWDYSGPYHGFDVAIFARNMDMTLNNPCWKKLQAPWEKAEESAEKVAASA.

A disordered region spans residues 21-44 (ARKDRAKHLSPNDPALEQSKKCIT). [8Fe-7S] cluster-binding residues include Cys59, Cys85, and Cys151. [7Fe-Mo-9S-C-homocitryl] cluster is bound by residues Cys272 and His439.

The protein belongs to the NifD/NifK/NifE/NifN family. Tetramer of two alpha and two beta chains. Forms complex with the iron protein (nitrogenase component 2). [8Fe-7S] cluster is required as a cofactor. It depends on [7Fe-Mo-9S-C-homocitryl] cluster as a cofactor.

It carries out the reaction N2 + 8 reduced [2Fe-2S]-[ferredoxin] + 16 ATP + 16 H2O = H2 + 8 oxidized [2Fe-2S]-[ferredoxin] + 2 NH4(+) + 16 ADP + 16 phosphate + 6 H(+). Its function is as follows. This molybdenum-iron protein is part of the nitrogenase complex that catalyzes the key enzymatic reactions in nitrogen fixation. This chain is Nitrogenase molybdenum-iron protein alpha chain (nifD), found in Alcaligenes faecalis.